Here is a 498-residue protein sequence, read N- to C-terminus: MTQYWLGLDCGGSWLKAGLYDREGREAGVQRLPLCALSPQPGWAERDMAELWQCCMAVIRALLTHSGVSGEQIVGIGISAQGKGLFLLDKNDKPLGNAILSSDRRAMEIVRRWQEDGIPEKLYPLTRQTLWTGHPVSLLRWLKEHEPERYAQIGCVMMTHDYLRWCLTGVKGCEESNISESNLYNMSLGEYDPCLTDWLGIAEINHALPPVVGSAEICGEITAQTAALTGLKAGTPVVGGLFDVVSTALCAGIEDEFTLNAVMGTWAVTSGITRGLRDGEAHPYVYGRYVNDGEFIVHEASPTSSGNLEWFTAQWGEISFDEINQAVASLPKAGGDLFFLPFLYGSNAGLEMTSGFYGMQAIHTRAHLLQAIYEGVVFSHMTHLNRMRERFTDVHTLRVTGGPAHSDVWMQMLADVSGLRIELPQVEETGCFGAALAARVGTGVYHNFSEAQRDLRHPVRTLLPDMTAHQLYQKKYQRYQHLIAALQGFHARIKEHTL.

Belongs to the FGGY kinase family. Homodimer.

It carries out the reaction L-xylulose + ATP = L-xylulose 5-phosphate + ADP + H(+). The enzyme catalyses 3-dehydro-L-gulonate + ATP = 3-dehydro-L-gulonate 6-phosphate + ADP + H(+). Catalyzes the phosphorylation of L-xylulose and 3-keto-L-gulonate. Is involved in L-lyxose utilization via xylulose, and may also be involved in the utilization of 2,3-diketo-L-gulonate. The sequence is that of L-xylulose/3-keto-L-gulonate kinase (lyx) from Escherichia coli (strain K12).